Reading from the N-terminus, the 428-residue chain is Serine--tRNA ligase (428 aa).

235–237 (TAE) contributes to the L-serine binding site. 266 to 268 (RSE) provides a ligand contact to ATP. E289 provides a ligand contact to L-serine. ATP is bound at residue 353 to 356 (EISS). S389 is a binding site for L-serine.

It belongs to the class-II aminoacyl-tRNA synthetase family. Type-1 seryl-tRNA synthetase subfamily. In terms of assembly, homodimer. The tRNA molecule binds across the dimer.

It localises to the cytoplasm. The catalysed reaction is tRNA(Ser) + L-serine + ATP = L-seryl-tRNA(Ser) + AMP + diphosphate + H(+). It carries out the reaction tRNA(Sec) + L-serine + ATP = L-seryl-tRNA(Sec) + AMP + diphosphate + H(+). Its pathway is aminoacyl-tRNA biosynthesis; selenocysteinyl-tRNA(Sec) biosynthesis; L-seryl-tRNA(Sec) from L-serine and tRNA(Sec): step 1/1. Its function is as follows. Catalyzes the attachment of serine to tRNA(Ser). Is also able to aminoacylate tRNA(Sec) with serine, to form the misacylated tRNA L-seryl-tRNA(Sec), which will be further converted into selenocysteinyl-tRNA(Sec). The polypeptide is Serine--tRNA ligase (Shewanella piezotolerans (strain WP3 / JCM 13877)).